A 249-amino-acid polypeptide reads, in one-letter code: Proteasome subunit alpha (249 aa).

The protein belongs to the peptidase T1A family. In terms of assembly, the 20S proteasome core is composed of 14 alpha and 14 beta subunits that assemble into four stacked heptameric rings, resulting in a barrel-shaped structure. The two inner rings, each composed of seven catalytic beta subunits, are sandwiched by two outer rings, each composed of seven alpha subunits. The catalytic chamber with the active sites is on the inside of the barrel. Has a gated structure, the ends of the cylinder being occluded by the N-termini of the alpha-subunits. Is capped at one or both ends by the proteasome regulatory ATPase, PAN.

It localises to the cytoplasm. The formation of the proteasomal ATPase PAN-20S proteasome complex, via the docking of the C-termini of PAN into the intersubunit pockets in the alpha-rings, triggers opening of the gate for substrate entry. Interconversion between the open-gate and close-gate conformations leads to a dynamic regulation of the 20S proteasome proteolysis activity. Functionally, component of the proteasome core, a large protease complex with broad specificity involved in protein degradation. This Methanosarcina mazei (strain ATCC BAA-159 / DSM 3647 / Goe1 / Go1 / JCM 11833 / OCM 88) (Methanosarcina frisia) protein is Proteasome subunit alpha.